We begin with the raw amino-acid sequence, 105 residues long: Class I hydrophobin 1 (105 aa).

Positions 1–17 (MQFTSFAILAISAVASA) are cleaved as a signal peptide. Cystine bridges form between Cys-36/Cys-85, Cys-44/Cys-78, Cys-45/Cys-63, and Cys-86/Cys-100. Asn-48, Asn-67, and Asn-97 each carry an N-linked (GlcNAc...) asparagine glycan.

Belongs to the fungal hydrophobin family. Self-assembles to form functional amyloid fibrils called rodlets. Self-assembly into fibrillar rodlets occurs spontaneously at hydrophobic:hydrophilic interfaces and the rodlets further associate laterally to form amphipathic monolayers. Abundant on conidia and aerial structures formed in vitro and emerging from disease lesions on infected tomato plants.

The protein localises to the secreted. Its subcellular location is the cell wall. In terms of biological role, aerial growth, conidiation, and dispersal of filamentous fungi in the environment rely upon a capability of their secreting small amphipathic proteins called hydrophobins (HPBs) with low sequence identity. Class I can self-assemble into an outermost layer of rodlet bundles on aerial cell surfaces, conferring cellular hydrophobicity that supports fungal growth, development and dispersal; whereas Class II form highly ordered films at water-air interfaces through intermolecular interactions but contribute nothing to the rodlet structure. Hcf-1 is a class I hydrophobin that is not necessary for the development of hyphae or conidia but acts as the main determinant of conidium hydrophobicity and, thus, is required for efficient water-mediated dispersal of conidia. Forms a component of the rodlet layer, but other hydrophobins must also participate in this proces. The chain is Class I hydrophobin 1 from Passalora fulva (Tomato leaf mold).